The sequence spans 509 residues: MLALMDDIQSAVFACVAVVIAIYAVRWYTDPINSIPTVGGSSLPGLSLLTAWRTVHNCREVLTAGYRKYPDSVFKIAMFDSWLVIASGRNMIEEVRKRHDELSTTLGIQEALRSRYIRDRQVMTDEYHVRVVKEKMSGRTLQAMLPDVIEEVSIAVKDHIATQGSGWTSLEVVPAMQKVIFQVNNRAFVGPVLCRSKEYLNVAIDFSEHTFKWSAILSVTPEFVRRIIAPFINEAKNDTRRAVPLLRPIIEERMKAQADLGEGWHDKPNDILQFVLDKAIPKEESMFLIVHRLLIVNHAASGNSVNAITYVLYHLAENPDILQACREEAEAKIAADGWTSTALANMWRLDSILRETLRYHGTALVSMNRLATKDVVLSDGTRLPKGTFMQAAAYPLHRDGALVENAHTFDPFRYARMRDADGEGLKHQASTTSPEYIPFGHGQHACPGRYFAAYVLKAILAHLIVNYDLKLGGDGSRPPIRYVLSAVLPPPGGCVLLKERGEGSTTTTG.

The helical transmembrane segment at 12-29 (VFACVAVVIAIYAVRWYT) threads the bilayer. C446 lines the heme pocket.

It belongs to the cytochrome P450 family. It depends on heme as a cofactor.

It is found in the membrane. It catalyses the reaction ganoderate DM + reduced [NADPH--hemoprotein reductase] + O2 = hainanate A + oxidized [NADPH--hemoprotein reductase] + H2O + H(+). It carries out the reaction ganoderate TR + reduced [NADPH--hemoprotein reductase] + O2 = ganoderate Jc + oxidized [NADPH--hemoprotein reductase] + H2O + H(+). It participates in secondary metabolite biosynthesis; terpenoid biosynthesis. Its function is as follows. Cytochrome P450 monooxygenase that hydroxylates the ganoderic acids DM and TR at the C-23 position to produce hainanic acid A and ganoderic acid Jc, respectively. This Ganoderma lucidum (Ling zhi medicinal fungus) protein is Cytochrome P450 monooxygenase CYP512U6.